A 1726-amino-acid polypeptide reads, in one-letter code: Transcription elongation factor SPT6 (1726 aa).

3 stretches are compositionally biased toward acidic residues: residues 1–14 (MSDFVESEAEESEE), 32–49 (EEEDDDEEEEEENLDDQD), and 59–80 (NDDDDEEEGEEDEGSDSGDSED). Residues 1-197 (MSDFVESEAE…DDGQPLKKPK (197 aa)) form a disordered region. The residue at position 2 (Ser-2) is an N-acetylserine. Residues 2-485 (SDFVESEAEE…PKMQNAAKAS (484 aa)) form an interaction with IWS1 region. Residues 2–916 (SDFVESEAEE…PPVLRQAVSL (915 aa)) form an interaction with PAAF1 region. Residues 3–51 (DFVESEAEESEEEYNHEGEVVPRVTKKFVEEEDDDEEEEEENLDDQDER) adopt a coiled-coil conformation. 2 positions are modified to phosphoserine: Ser-7 and Ser-12. Ser-73, Ser-78, and Ser-91 each carry phosphoserine. The span at 95-105 (RLEDDDFDLIE) shows a compositional bias: acidic residues. Residues 111 to 122 (KVKRGQKYRRVK) show a composition bias toward basic residues. Position 125 is a phosphoserine (Ser-125). Composition is skewed to acidic residues over residues 126-136 (DDDEDDEEEYG), 150-160 (FQDEEGEEGQE), and 169-190 (PDEEEEDDEESDIDDFIVDDDG). Position 267 is a phosphoserine (Ser-267). The segment at 317–1300 (ADWIYRNAFA…NEWKLPKDTY (984 aa)) is interaction with KDM6A. The interval 489 to 520 (LKRIKEDGDEEGEGEEAEDEEQRGPELKQASR) is disordered. The span at 495-509 (DGDEEGEGEEAEDEE) shows a compositional bias: acidic residues. Residues 510 to 520 (QRGPELKQASR) are compositionally biased toward basic and acidic residues. N6-acetyllysine is present on Lys-743. The 70-residue stretch at 1213 to 1282 (WNHFDSGSCP…EKFSADLTCR (70 aa)) folds into the S1 motif domain. The 107-residue stretch at 1325-1431 (YIKRVIAHPS…FARDLLNHKY (107 aa)) folds into the SH2 domain. Tyr-1515 carries the post-translational modification Phosphotyrosine. Position 1523 is a phosphothreonine (Thr-1523). Ser-1526 carries the post-translational modification Phosphoserine. A phosphothreonine mark is found at Thr-1530 and Thr-1532. Position 1535 is a phosphoserine (Ser-1535). Thr-1539 bears the Phosphothreonine mark. The segment at 1633 to 1726 (PQYHQLQAST…ATPLLDEMDR (94 aa)) is interaction with histone H2B and H3. The segment at 1636 to 1726 (HQLQASTTPQ…ATPLLDEMDR (91 aa)) is disordered. The segment covering 1639 to 1664 (QASTTPQSTQAQPQPSSSSRQRQQQP) has biased composition (low complexity). At Lys-1676 the chain carries N6-acetyllysine. At Thr-1697 the chain carries Phosphothreonine. 2 positions are modified to phosphoserine: Ser-1701 and Ser-1703. 2 positions are modified to phosphothreonine: Thr-1709 and Thr-1718.

Belongs to the SPT6 family. Interacts with RNA polymerase II and the DRB sensitivity-inducing factor complex (DSIF complex), which is composed of SUPT5H and SUPT4H1 or SUPT4H2. Interacts with PAAF1. Interacts with histone H2B and H3. Interacts (via SH2 domain) with POLR2A phosphorylated at 'Ser-2'. Interacts (via SH2 domain) with SETD1A. Interacts with IWS1, KDM6A and AICDA. Interacts with WDR43. Post-translationally, dephosphorylated at Ser-1530 by the PNUTS-PP1 complex during RNA polymerase II transcription pause-release. Ubiquitously expressed.

The protein localises to the nucleus. Its function is as follows. Histone H3-H4 chaperone that plays a key role in the regulation of transcription elongation and mRNA processing. Enhances the transcription elongation by RNA polymerase II (RNAPII) and is also required for the efficient activation of transcriptional elongation by the HIV-1 nuclear transcriptional activator, Tat. Besides chaperoning histones in transcription, acts to transport and splice mRNA by forming a complex with IWS1 and the C-terminal domain (CTD) of the RNAPII subunit RPB1 (POLR2A). The SUPT6H:IWS1:CTD complex recruits mRNA export factors (ALYREF/THOC4, EXOSC10) as well as histone modifying enzymes (such as SETD2), to ensure proper mRNA splicing, efficient mRNA export and elongation-coupled H3K36 methylation, a signature chromatin mark of active transcription. SUPT6H via its association with SETD1A, regulates both class-switch recombination and somatic hypermutation through formation of H3K4me3 epigenetic marks on activation-induced cytidine deaminase (AICDA) target loci. Promotes the activation of the myogenic gene program by entailing erasure of the repressive H3K27me3 epigenetic mark through stabilization of the chromatin interaction of the H3K27 demethylase KDM6A. The polypeptide is Transcription elongation factor SPT6 (Supt6h) (Mus musculus (Mouse)).